The primary structure comprises 156 residues: Small ribosomal subunit protein uS7 (156 aa).

This sequence belongs to the universal ribosomal protein uS7 family. In terms of assembly, part of the 30S ribosomal subunit. Contacts proteins S9 and S11.

Its function is as follows. One of the primary rRNA binding proteins, it binds directly to 16S rRNA where it nucleates assembly of the head domain of the 30S subunit. Is located at the subunit interface close to the decoding center, probably blocks exit of the E-site tRNA. The sequence is that of Small ribosomal subunit protein uS7 from Leifsonia xyli subsp. xyli (strain CTCB07).